The primary structure comprises 94 residues: UPF0213 protein BH0048 (94 aa).

The GIY-YIG domain maps to 1–76 (MNHYVYILEC…KHLSRRKKEQ (76 aa)).

This sequence belongs to the UPF0213 family.

In Halalkalibacterium halodurans (strain ATCC BAA-125 / DSM 18197 / FERM 7344 / JCM 9153 / C-125) (Bacillus halodurans), this protein is UPF0213 protein BH0048.